Here is a 105-residue protein sequence, read N- to C-terminus: Molt-inhibiting hormone (105 aa).

The first 28 residues, 1-28, serve as a signal peptide directing secretion; it reads MYRLAMRTWLAIVIVVVGTSLLFDTASA. Disulfide bonds link C35/C72, C52/C68, and C55/C81.

This sequence belongs to the arthropod CHH/MIH/GIH/VIH hormone family. Produced by the medulla terminalis X-organ in the eyestalks and transported to the sinus gland where it is stored and released.

It localises to the secreted. Its function is as follows. Inhibits Y-organs where molting hormone (ecdysteroid) is secreted. A molting cycle is initiated when MIH secretion diminishes or stops. Has little or no hyperglycemic activity. The protein is Molt-inhibiting hormone of Penaeus japonicus (Kuruma prawn).